A 501-amino-acid polypeptide reads, in one-letter code: Glutathione gamma-glutamylcysteinyltransferase 1 (501 aa).

The Peptidase C83 domain occupies methionine 1–arginine 221. Residues cysteine 56, histidine 162, and aspartate 180 contribute to the active site.

The protein belongs to the phytochelatin synthase family. In terms of tissue distribution, expressed in roots, nodules and leaves.

The catalysed reaction is [Glu(-Cys)](n)-Gly + glutathione + H(+) = [Glu(-Cys)](n+1)-Gly + glycine. Its activity is regulated as follows. Requires cadmium for activity. Also activated in vitro by Zn(2+), Cu(2+), Fe(2+) or Fe(3+) ions, but not by Co(2+) or Ni(2+) ions. Its function is as follows. Involved in the synthesis of phytochelatins (PC) and homophytochelatins (hPC), the heavy-metal-binding peptides of plants. The sequence is that of Glutathione gamma-glutamylcysteinyltransferase 1 (PCS1) from Lotus japonicus (Lotus corniculatus var. japonicus).